Consider the following 934-residue polypeptide: Translation initiation factor IF-2 (934 aa).

Residues 54 to 323 (AQESKPTTPP…KRQKRNEYEA (270 aa)) are disordered. 4 stretches are compositionally biased toward low complexity: residues 80 to 154 (PKPG…AGKP), 185 to 197 (RGGA…PRPG), 206 to 231 (GQAP…PGAA), and 238 to 250 (RPSP…TPSP). The segment covering 260–303 (GFGGGRGRGGRPGGPGGPGGPGGPGPRGGRGGRRGGTAGAFGRP) has biased composition (gly residues). Residues 308 to 317 (RRGRKSKRQK) show a composition bias toward basic residues. The 173-residue stretch at 430-602 (QRPPVVTVMG…VLLTADASLD (173 aa)) folds into the tr-type G domain. The segment at 439–446 (GHVDHGKT) is G1. 439-446 (GHVDHGKT) lines the GTP pocket. The interval 464 to 468 (GITQH) is G2. The tract at residues 489-492 (DTPG) is G3. GTP is bound by residues 489 to 493 (DTPGH) and 543 to 546 (NKID). The interval 543-546 (NKID) is G4. The segment at 579–581 (SAK) is G5.

It belongs to the TRAFAC class translation factor GTPase superfamily. Classic translation factor GTPase family. IF-2 subfamily.

Its subcellular location is the cytoplasm. In terms of biological role, one of the essential components for the initiation of protein synthesis. Protects formylmethionyl-tRNA from spontaneous hydrolysis and promotes its binding to the 30S ribosomal subunits. Also involved in the hydrolysis of GTP during the formation of the 70S ribosomal complex. The chain is Translation initiation factor IF-2 from Corynebacterium urealyticum (strain ATCC 43042 / DSM 7109).